A 220-amino-acid polypeptide reads, in one-letter code: Glycerol-3-phosphate acyltransferase (220 aa).

Helical transmembrane passes span 11 to 31 (INVIFTLLGYLIGGIPFGYAL), 70 to 90 (LLILILDLFKGMFAVFLSKLF), 96 to 116 (LQWMVAIASILGHCYSPFLNF), 127 to 147 (GSVVLLIPIESLIGLMVWFFV), 153 to 173 (ISSLASIVGVGTATILIFFVP), and 193 to 213 (MVLIFIFTLIKHVGNIFNLLA).

It belongs to the PlsY family. As to quaternary structure, probably interacts with PlsX.

Its subcellular location is the cell inner membrane. It carries out the reaction an acyl phosphate + sn-glycerol 3-phosphate = a 1-acyl-sn-glycero-3-phosphate + phosphate. The protein operates within lipid metabolism; phospholipid metabolism. Functionally, catalyzes the transfer of an acyl group from acyl-phosphate (acyl-PO(4)) to glycerol-3-phosphate (G3P) to form lysophosphatidic acid (LPA). This enzyme utilizes acyl-phosphate as fatty acyl donor, but not acyl-CoA or acyl-ACP. This chain is Glycerol-3-phosphate acyltransferase, found in Helicobacter acinonychis (strain Sheeba).